Reading from the N-terminus, the 1038-residue chain is Ubiquitin carboxyl-terminal hydrolase 36 (1038 aa).

2 disordered regions span residues 22–44 (LGGN…TNGS) and 107–148 (ANGH…PKPK). Positions 23-44 (GGNSSAGSSTDQAKSGEDTNGS) are enriched in polar residues. The USP domain occupies 172–480 (TGMINVGNTC…NAYIMFFELD (309 aa)). Catalysis depends on C181, which acts as the Nucleophile. H439 serves as the catalytic Proton acceptor. Disordered regions lie at residues 487–794 (PAAN…SKTG), 818–881 (GSPV…SNGS), 912–985 (LLVD…YNQN), and 1000–1038 (RFGG…QQQT). Low complexity-rich tracts occupy residues 502-517 (STTP…PSPT), 546-559 (QQNQ…LQLG), and 587-606 (NGNK…KSIN). Phosphoserine is present on residues S513 and S515. Over residues 629–641 (TTAQLPSMPNMTE) the composition is skewed to polar residues. A phosphothreonine mark is found at T658 and T662. 2 positions are modified to phosphoserine: S672 and S674. Over residues 703-728 (TNGHSKTNGSHTNGSASSSVHVNNSK) the composition is skewed to polar residues. The segment covering 729–746 (QKTDAIDEIFKSLKKSAD) has biased composition (basic and acidic residues). The residue at position 747 (S747) is a Phosphoserine. Over residues 747-756 (SDEDDDEEEP) the composition is skewed to acidic residues. Positions 766 to 776 (PQKQSQSQSKA) are enriched in low complexity. Over residues 777 to 786 (PPSPKTPPSP) the composition is skewed to pro residues. S779 carries the phosphoserine modification. A Phosphothreonine modification is found at T782. 2 positions are modified to phosphoserine: S785 and S819. T825 carries the phosphothreonine modification. Residues 832 to 844 (NPFSSSKPSTDSP) are compositionally biased toward polar residues. Phosphoserine is present on S843. T846 is subject to Phosphothreonine. Over residues 859–881 (ALKSHQQPRVGNGYQSNATSNGS) the composition is skewed to polar residues. Basic and acidic residues predominate over residues 912-923 (LLVDAREQRQRD). The span at 942-953 (SGSAKGNNASNS) shows a compositional bias: low complexity.

It belongs to the peptidase C19 family. As to quaternary structure, interacts with atms/PAF1, but not with CycT. Interacts (via C-terminus) with imd (via N-terminus).

It localises to the nucleus. The protein localises to the nucleolus. Its subcellular location is the cytoplasm. The enzyme catalyses Thiol-dependent hydrolysis of ester, thioester, amide, peptide and isopeptide bonds formed by the C-terminal Gly of ubiquitin (a 76-residue protein attached to proteins as an intracellular targeting signal).. Functionally, hydrolase that deubiquitinates polyubiquitinated target proteins including imd. Required for preventing the constitutive activation of the imd/NF-kappa-B (Imd) signaling cascade under unchalleneged conditions. Deubiquitinates imd linked 'Lys-63' chains which leads its proteasomal degradation and consequently down-regulation of the Imd signaling cascade. Removal of the activating 'Lys-63'-linked chains is likely to enable their replacement with 'Lys-48'-linked chains which act as 'tags' the for proteasomal degradation of imd. Required for maintaining multiple types of adult stem cells, including male and female germline, epithelial follicle cell and intestinal stem cells. May function as a transcriptional repressor by continually deubiquiting histone H2B at the promoters of genes critical for cellular differentiation, thereby preventing histone H3 'Lys-4' trimethylation (H3K4me3). Controls selective autophagy activation by ubiquitinated proteins. The polypeptide is Ubiquitin carboxyl-terminal hydrolase 36 (scny) (Drosophila melanogaster (Fruit fly)).